The sequence spans 763 residues: Translation initiation factor IF-2, chloroplastic (763 aa).

Disordered stretches follow at residues Met-1–Ser-22, Ile-52–Ala-122, and Asn-149–Ile-168. The segment covering Ser-13–Ser-22 has biased composition (low complexity). A compositionally biased stretch (basic and acidic residues) spans Arg-73–Lys-92. The span at Asn-93–Lys-104 shows a compositional bias: basic residues. The span at Lys-151–Ile-168 shows a compositional bias: polar residues. A tr-type G domain is found at Asn-261–Leu-429. GTP-binding positions include Gly-270–Thr-277, Asp-316–His-320, and Ser-370–Asp-373.

This sequence belongs to the TRAFAC class translation factor GTPase superfamily. Classic translation factor GTPase family. IF-2 subfamily.

It localises to the plastid. The protein localises to the chloroplast. One of the essential components for the initiation of protein synthesis. Protects formylmethionyl-tRNA from spontaneous hydrolysis and promotes its binding to the 30S ribosomal subunits. Also involved in the hydrolysis of GTP during the formation of the 70S ribosomal complex. The polypeptide is Translation initiation factor IF-2, chloroplastic (infB) (Porphyra purpurea (Red seaweed)).